The primary structure comprises 307 residues: Taste receptor type 2 member 41 (307 aa).

Over 1-7 (MQAALTA) the chain is Extracellular. Residues 8–28 (FFMLFFSLLSLLGIAANGFIV) traverse the membrane as a helical segment. Topologically, residues 29–40 (LVLGREWLQYGR) are cytoplasmic. Residues 41 to 61 (LLPLDMILISLGVSRFCLQLV) traverse the membrane as a helical segment. Residues 62 to 88 (GTVYNFYYSAHKVEYSGGLSRQFFHLH) lie on the Extracellular side of the membrane. The chain crosses the membrane as a helical span at residues 89–109 (WHFLNLATFXFCSWLSVLFCV). Residues 110-129 (KXANITHPTFLWLKWRFPGW) are Cytoplasmic-facing. A helical transmembrane segment spans residues 130-150 (VPWLLLGSVLISFIITLLLFW). Over 151–183 (VNYPVYQEFLIRKFSGNMTYEWNTRIEMYYLPS) the chain is Extracellular. N-linked (GlcNAc...) asparagine glycosylation is present at Asn-167. Residues 184-204 (LKLVIWSIPCSVFLVSIMLLI) traverse the membrane as a helical segment. Over 205–234 (NSLRRHTWRMQHNGHSLQDPSTQAHTRAXK) the chain is Cytoplasmic. Residues 235-255 (SLISFLILYVLSFLSLIIDAT) form a helical membrane-spanning segment. Over 256–264 (KFISMQNDF) the chain is Extracellular. A helical transmembrane segment spans residues 265–285 (YWPWQTAVYLGVSVHPFILIF). The Cytoplasmic portion of the chain corresponds to 286 to 307 (SNLKLRSVFWKLLLLARGFWVA).

This sequence belongs to the G-protein coupled receptor T2R family.

It is found in the membrane. Functionally, receptor that may play a role in the perception of bitterness and is gustducin-linked. May play a role in sensing the chemical composition of the gastrointestinal content. The activity of this receptor may stimulate alpha gustducin, mediate PLC-beta-2 activation and lead to the gating of TRPM5. In Pongo pygmaeus (Bornean orangutan), this protein is Taste receptor type 2 member 41 (TAS2R41).